The sequence spans 99 residues: Large ribosomal subunit protein bL27 (99 aa).

A propeptide spanning residues 1–9 (MLIMNLQLF) is cleaved from the precursor.

This sequence belongs to the bacterial ribosomal protein bL27 family. In terms of processing, the N-terminus is cleaved by ribosomal processing cysteine protease Prp.

The chain is Large ribosomal subunit protein bL27 from Clostridium botulinum (strain Alaska E43 / Type E3).